We begin with the raw amino-acid sequence, 360 residues long: Histidinol-phosphate aminotransferase (360 aa).

The residue at position 223 (lysine 223) is an N6-(pyridoxal phosphate)lysine.

Belongs to the class-II pyridoxal-phosphate-dependent aminotransferase family. Histidinol-phosphate aminotransferase subfamily. In terms of assembly, homodimer. Requires pyridoxal 5'-phosphate as cofactor.

The catalysed reaction is L-histidinol phosphate + 2-oxoglutarate = 3-(imidazol-4-yl)-2-oxopropyl phosphate + L-glutamate. It participates in amino-acid biosynthesis; L-histidine biosynthesis; L-histidine from 5-phospho-alpha-D-ribose 1-diphosphate: step 7/9. In Bacillus subtilis (strain 168), this protein is Histidinol-phosphate aminotransferase (hisC).